Reading from the N-terminus, the 421-residue chain is 4-hydroxy-3-methylbut-2-en-1-yl diphosphate synthase (flavodoxin) (421 aa).

4 residues coordinate [4Fe-4S] cluster: C298, C301, C344, and E351.

This sequence belongs to the IspG family. [4Fe-4S] cluster is required as a cofactor.

The catalysed reaction is (2E)-4-hydroxy-3-methylbut-2-enyl diphosphate + oxidized [flavodoxin] + H2O + 2 H(+) = 2-C-methyl-D-erythritol 2,4-cyclic diphosphate + reduced [flavodoxin]. It participates in isoprenoid biosynthesis; isopentenyl diphosphate biosynthesis via DXP pathway; isopentenyl diphosphate from 1-deoxy-D-xylulose 5-phosphate: step 5/6. In terms of biological role, converts 2C-methyl-D-erythritol 2,4-cyclodiphosphate (ME-2,4cPP) into 1-hydroxy-2-methyl-2-(E)-butenyl 4-diphosphate. The chain is 4-hydroxy-3-methylbut-2-en-1-yl diphosphate synthase (flavodoxin) from Neisseria meningitidis serogroup C (strain 053442).